A 202-amino-acid polypeptide reads, in one-letter code: Cytochrome c oxidase assembly protein CtaG (202 aa).

Residues 1–14 are Cytoplasmic-facing; it reads MSDKAAAPRKQGRN. Residues 15–37 form a helical; Signal-anchor for type II membrane protein membrane-spanning segment; that stretch reads NGAVVMMCLSFVFGMGAMSYAAV. Topologically, residues 38–202 are periplasmic; it reads PLYRIFCQVT…GGTVKIEKKL (165 aa).

It belongs to the COX11/CtaG family.

The protein resides in the cell inner membrane. Functionally, exerts its effect at some terminal stage of cytochrome c oxidase synthesis, probably by being involved in the insertion of the copper B into subunit I. The sequence is that of Cytochrome c oxidase assembly protein CtaG from Rhizobium etli (strain ATCC 51251 / DSM 11541 / JCM 21823 / NBRC 15573 / CFN 42).